A 358-amino-acid chain; its full sequence is Uroporphyrinogen decarboxylase (358 aa).

Residues 27-31, Asp-77, Tyr-154, Ser-209, and His-330 contribute to the substrate site; that span reads RQAGR.

Belongs to the uroporphyrinogen decarboxylase family. As to quaternary structure, homodimer.

The protein localises to the cytoplasm. It catalyses the reaction uroporphyrinogen III + 4 H(+) = coproporphyrinogen III + 4 CO2. It functions in the pathway porphyrin-containing compound metabolism; protoporphyrin-IX biosynthesis; coproporphyrinogen-III from 5-aminolevulinate: step 4/4. Functionally, catalyzes the decarboxylation of four acetate groups of uroporphyrinogen-III to yield coproporphyrinogen-III. This Acinetobacter baylyi (strain ATCC 33305 / BD413 / ADP1) protein is Uroporphyrinogen decarboxylase.